Consider the following 551-residue polypeptide: Membrane protein insertase YidC (551 aa).

The helical transmembrane segment at 3 to 23 (ANHIRILLLVTIAIMLISLMG) threads the bilayer. Positions 30 to 43 (PSNSSQSQTTQTQQ) are enriched in low complexity. The tract at residues 30–61 (PSNSSQSQTTQTQQDNSHYNSDTPATTNVSTS) is disordered. Residues 44 to 61 (DNSHYNSDTPATTNVSTS) are compositionally biased toward polar residues. 3 helical membrane passes run 361-381 (LVGN…LIFY), 431-451 (LSGC…YWVL), and 504-524 (IMMF…SGLV).

The protein belongs to the OXA1/ALB3/YidC family. Type 1 subfamily. As to quaternary structure, interacts with the Sec translocase complex via SecD. Specifically interacts with transmembrane segments of nascent integral membrane proteins during membrane integration.

It localises to the cell inner membrane. Its function is as follows. Required for the insertion and/or proper folding and/or complex formation of integral membrane proteins into the membrane. Involved in integration of membrane proteins that insert both dependently and independently of the Sec translocase complex, as well as at least some lipoproteins. Aids folding of multispanning membrane proteins. This chain is Membrane protein insertase YidC, found in Francisella philomiragia subsp. philomiragia (strain ATCC 25017 / CCUG 19701 / FSC 153 / O#319-036).